Consider the following 156-residue polypeptide: Endoribonuclease YbeY (156 aa).

Residues histidine 122, histidine 126, and histidine 132 each coordinate Zn(2+).

The protein belongs to the endoribonuclease YbeY family. It depends on Zn(2+) as a cofactor.

The protein localises to the cytoplasm. In terms of biological role, single strand-specific metallo-endoribonuclease involved in late-stage 70S ribosome quality control and in maturation of the 3' terminus of the 16S rRNA. The chain is Endoribonuclease YbeY from Pediococcus pentosaceus (strain ATCC 25745 / CCUG 21536 / LMG 10740 / 183-1w).